Here is a 141-residue protein sequence, read N- to C-terminus: Sec-independent protein translocase protein TatB (141 aa).

Residues 2-22 traverse the membrane as a helical segment; that stretch reads FANVGWGEMLVLVIAGLVILG. The interval 92–141 is disordered; that stretch reads IFTGRFDSTSSDQPGSGKPPKPQSGPGPAAASGPAATTTPASTPFDPDAT. Residues 117-141 show a composition bias toward low complexity; that stretch reads PGPAAASGPAATTTPASTPFDPDAT.

The protein belongs to the TatB family. The Tat system comprises two distinct complexes: a TatABC complex, containing multiple copies of TatA, TatB and TatC subunits, and a separate TatA complex, containing only TatA subunits. Substrates initially bind to the TatABC complex, which probably triggers association of the separate TatA complex to form the active translocon.

It is found in the cell membrane. Functionally, part of the twin-arginine translocation (Tat) system that transports large folded proteins containing a characteristic twin-arginine motif in their signal peptide across membranes. Together with TatC, TatB is part of a receptor directly interacting with Tat signal peptides. TatB may form an oligomeric binding site that transiently accommodates folded Tat precursor proteins before their translocation. The polypeptide is Sec-independent protein translocase protein TatB (Mycolicibacterium gilvum (strain PYR-GCK) (Mycobacterium gilvum (strain PYR-GCK))).